The chain runs to 168 residues: MNAQLFNLESRLDELENEINTQYCELDTNLDALKSNRIELESQLEKFESSLTNRLQGSISNNCRNDLLNLGYTHSQVDCMSDEEVYAALDKIDEEIHNTDQDYSTGFEDLEKQIIEMKRDYFIDRKERGSGNFDEAWEGEILDLEFEYTVLCLEKGLEPLNYIITWEG.

Residues 1 to 53 (MNAQLFNLESRLDELENEINTQYCELDTNLDALKSNRIELESQLEKFESSLTN) are a coiled coil.

The polypeptide is SPbeta prophage-derived uncharacterized protein YonX (yonX) (Bacillus subtilis (strain 168)).